A 256-amino-acid polypeptide reads, in one-letter code: tRNA (guanine-N(7)-)-methyltransferase (256 aa).

S-adenosyl-L-methionine contacts are provided by Glu-85, Glu-110, Asp-137, and Asp-159. Residue Asp-159 is part of the active site. Lys-163 and Asp-195 together coordinate substrate.

The protein belongs to the class I-like SAM-binding methyltransferase superfamily. TrmB family.

The catalysed reaction is guanosine(46) in tRNA + S-adenosyl-L-methionine = N(7)-methylguanosine(46) in tRNA + S-adenosyl-L-homocysteine. It functions in the pathway tRNA modification; N(7)-methylguanine-tRNA biosynthesis. Catalyzes the formation of N(7)-methylguanine at position 46 (m7G46) in tRNA. The chain is tRNA (guanine-N(7)-)-methyltransferase from Rhodopseudomonas palustris (strain HaA2).